Consider the following 469-residue polypeptide: Glutamate--tRNA ligase (469 aa).

The 'HIGH' region signature appears at 8-18; sequence PSPTGFLHVGG. Positions 97, 99, 124, and 126 each coordinate Zn(2+). The short motif at 236–240 is the 'KMSKS' region element; the sequence is KLSKR. Position 239 (Lys-239) interacts with ATP.

The protein belongs to the class-I aminoacyl-tRNA synthetase family. Glutamate--tRNA ligase type 1 subfamily. As to quaternary structure, monomer. It depends on Zn(2+) as a cofactor.

It is found in the cytoplasm. It carries out the reaction tRNA(Glu) + L-glutamate + ATP = L-glutamyl-tRNA(Glu) + AMP + diphosphate. In terms of biological role, catalyzes the attachment of glutamate to tRNA(Glu) in a two-step reaction: glutamate is first activated by ATP to form Glu-AMP and then transferred to the acceptor end of tRNA(Glu). This is Glutamate--tRNA ligase from Francisella philomiragia subsp. philomiragia (strain ATCC 25017 / CCUG 19701 / FSC 153 / O#319-036).